A 129-amino-acid chain; its full sequence is MAQNKTIAVALLLATLVAVMGKEPETLEETLRAGCKEECSEQKKKAPIDEKQCEDFCFIKTKSIFEAHKGVKDLKADRFIDFCNNECNAVYKEDPATSKKCAESCEADAKEAEVFLDKVVAYMQTMKQA.

This is an uncharacterized protein from Oryza sativa subsp. indica (Rice).